Reading from the N-terminus, the 198-residue chain is MLITLEGIDGAGKSTLYEGLKTRLQDLEPVFTKEPGSPLVNSAVRREIGANRDPFAEATLFVADHAAHLAQVVLPALEEKKLVISDRYSDSRFAYQQVSLIGIVPDPKAWLTAVHAGWSVRPDLTILLLISPETAMNRLHERPGKEHFEDPAFLEEVQKKYLERVTEDPERFLLIDAAQEPETILDFVEKSIRALPRQ.

ATP is bound at residue 7-14; it reads GIDGAGKS.

It belongs to the thymidylate kinase family.

The catalysed reaction is dTMP + ATP = dTDP + ADP. The protein is Probable thymidylate kinase of Methanocorpusculum labreanum (strain ATCC 43576 / DSM 4855 / Z).